The chain runs to 199 residues: Recombination protein RecR (199 aa).

The C4-type zinc finger occupies 58–73 (CSRCFYFTEEDPCPLC). The region spanning 81-176 (QLICVVEEPQ…KVTRLAHGIP (96 aa)) is the Toprim domain.

This sequence belongs to the RecR family.

Functionally, may play a role in DNA repair. It seems to be involved in an RecBC-independent recombinational process of DNA repair. It may act with RecF and RecO. The sequence is that of Recombination protein RecR from Syntrophotalea carbinolica (strain DSM 2380 / NBRC 103641 / GraBd1) (Pelobacter carbinolicus).